We begin with the raw amino-acid sequence, 145 residues long: D-aminoacyl-tRNA deacylase (145 aa).

The short motif at 137-138 (GP) is the Gly-cisPro motif, important for rejection of L-amino acids element.

This sequence belongs to the DTD family. As to quaternary structure, homodimer.

Its subcellular location is the cytoplasm. The catalysed reaction is glycyl-tRNA(Ala) + H2O = tRNA(Ala) + glycine + H(+). It carries out the reaction a D-aminoacyl-tRNA + H2O = a tRNA + a D-alpha-amino acid + H(+). An aminoacyl-tRNA editing enzyme that deacylates mischarged D-aminoacyl-tRNAs. Also deacylates mischarged glycyl-tRNA(Ala), protecting cells against glycine mischarging by AlaRS. Acts via tRNA-based rather than protein-based catalysis; rejects L-amino acids rather than detecting D-amino acids in the active site. By recycling D-aminoacyl-tRNA to D-amino acids and free tRNA molecules, this enzyme counteracts the toxicity associated with the formation of D-aminoacyl-tRNA entities in vivo and helps enforce protein L-homochirality. The polypeptide is D-aminoacyl-tRNA deacylase (Rhodococcus jostii (strain RHA1)).